We begin with the raw amino-acid sequence, 404 residues long: Cysteine desulfurase IscS (404 aa).

Residues 75–76 (AT), Asn-155, Gln-183, and 203–205 (SAH) each bind pyridoxal 5'-phosphate. At Lys-206 the chain carries N6-(pyridoxal phosphate)lysine. Residue Thr-243 coordinates pyridoxal 5'-phosphate. Cys-328 (cysteine persulfide intermediate) is an active-site residue. Cys-328 is a [2Fe-2S] cluster binding site.

Belongs to the class-V pyridoxal-phosphate-dependent aminotransferase family. NifS/IscS subfamily. Homodimer. Forms a heterotetramer with IscU, probably interacts with other sulfur acceptors. Pyridoxal 5'-phosphate serves as cofactor.

Its subcellular location is the cytoplasm. It catalyses the reaction (sulfur carrier)-H + L-cysteine = (sulfur carrier)-SH + L-alanine. Its pathway is cofactor biosynthesis; iron-sulfur cluster biosynthesis. Inhibited by equimolar N-iodoacetyl-N'-(5-sulfo-1-naphthyl)ethylenediamine. Master enzyme that delivers sulfur to a number of partners involved in Fe-S cluster assembly, tRNA modification or cofactor biosynthesis. Catalyzes the removal of elemental sulfur from cysteine to produce alanine via an enzyme-bound persulfide intermediate. Functions as a sulfur delivery protein for Fe-S cluster synthesis. Cluster assembly on IscU homodimers proceeds sequentially from 1 2Fe-2S per dimer, to 2 2Fe-2S per dimer and finally 1 4Fe-4S per dimer. The polypeptide is Cysteine desulfurase IscS (Azotobacter vinelandii).